The sequence spans 209 residues: A-type ATP synthase subunit D (209 aa).

It belongs to the V-ATPase D subunit family. Has multiple subunits with at least A(3), B(3), C, D, E, F, H, I and proteolipid K(x).

It is found in the cell membrane. Its function is as follows. Component of the A-type ATP synthase that produces ATP from ADP in the presence of a proton gradient across the membrane. The sequence is that of A-type ATP synthase subunit D from Methanosarcina acetivorans (strain ATCC 35395 / DSM 2834 / JCM 12185 / C2A).